The primary structure comprises 786 residues: Aculeacin-A acylase (786 aa).

A signal peptide spans 1 to 22; that stretch reads MTSSYMRLKAAAIAFGVIVATA. The propeptide occupies 23-34; it reads AVPSPASGREHD. Positions 35 to 130 are substrate-binding; the sequence is GGYAALIRRA…PRDGVRAPCD (96 aa). Residues 215–229 constitute a propeptide, spacer peptide; the sequence is AAIAAALDGTSAGIG. A possible recognition-sequence of an AAC processing enzyme region spans residues 220 to 239; it reads ALDGTSAGIGSNAYGLGAQA. The active-site Nucleophile is the serine 230. Residues 658-689 form a disordered region; sequence ACNGSPASPSTRSVGDIHTDSRGERRIPIHGG. The span at 672–684 shows a compositional bias: basic and acidic residues; it reads GDIHTDSRGERRI.

Belongs to the peptidase S45 family. Heterodimer of a small subunit and a large subunit processed from the same precursor.

It is found in the secreted. In terms of biological role, catalyzes the hydrolysis of the palmitoyl moiety of the antifungal antibiotic, aculeacin-A, giving a hexapeptide moiety and a long chain fatty acid. The polypeptide is Aculeacin-A acylase (aac) (Actinoplanes utahensis).